The chain runs to 77 residues: Acyl carrier protein (77 aa).

The Carrier domain maps to 2 to 77 (SNIEERVKKI…AAIDYVSKNQ (76 aa)). At Ser-37 the chain carries O-(pantetheine 4'-phosphoryl)serine.

This sequence belongs to the acyl carrier protein (ACP) family. 4'-phosphopantetheine is transferred from CoA to a specific serine of apo-ACP by AcpS. This modification is essential for activity because fatty acids are bound in thioester linkage to the sulfhydryl of the prosthetic group.

It localises to the cytoplasm. Its pathway is lipid metabolism; fatty acid biosynthesis. Carrier of the growing fatty acid chain in fatty acid biosynthesis. In Shewanella denitrificans (strain OS217 / ATCC BAA-1090 / DSM 15013), this protein is Acyl carrier protein.